The chain runs to 227 residues: Glial cell line-derived neurotrophic factor (227 aa).

Residues 1-19 form the signal peptide; sequence MKLWAILAVCILLLSSVSS. The propeptide occupies 20–93; it reads IPLPSNWLAG…EFIQDTIKRL (74 aa). Disordered regions lie at residues 32-61 and 93-113; these read RSHLPDPQEGEDQVFGMDGAVPEDPTANMA and LKRSSNKQPPSRRDRGRQSLA. 3 cysteine pairs are disulfide-bonded: cysteine 134/cysteine 195, cysteine 161/cysteine 224, and cysteine 165/cysteine 226. Asparagine 142 and asparagine 178 each carry an N-linked (GlcNAc...) asparagine glycan.

Belongs to the TGF-beta family. GDNF subfamily. In terms of assembly, homodimer; disulfide-linked. Interacts with GFRA1 coreceptor and RET: forms a 2:2:2 ternary complex composed of GDNF ligand, GFRA1 and RET receptor. From stage 22, expressed in somites and the pronephros. At stage 24 and 26, expressed in the pharyngeal arches I-III. At stage 31, expression in the eye, central nervous system and pharyngeal arches IV and V increases. Up to stage 34, expression becomes intense at the oral cavity and lateral line structures. At this stage, expression weakens in the pharyngeal arches, and increases in the epibranchial arches. Expressed in the digestive tract in stage 34 embryos.

It is found in the secreted. In terms of biological role, neurotrophic factor that enhances survival and morphological differentiation of dopaminergic neurons and increases their high-affinity dopamine uptake. Acts by binding to its coreceptor, GFRA1, leading to autophosphorylation and activation of the RET receptor. This chain is Glial cell line-derived neurotrophic factor, found in Xenopus laevis (African clawed frog).